Reading from the N-terminus, the 166-residue chain is Ribosome maturation factor RimM (166 aa).

Residues 91-165 form the PRC barrel domain; that stretch reads DDEFYHADLI…RIVADPPEGL (75 aa).

It belongs to the RimM family. In terms of assembly, binds ribosomal protein uS19.

Its subcellular location is the cytoplasm. Its function is as follows. An accessory protein needed during the final step in the assembly of 30S ribosomal subunit, possibly for assembly of the head region. Essential for efficient processing of 16S rRNA. May be needed both before and after RbfA during the maturation of 16S rRNA. It has affinity for free ribosomal 30S subunits but not for 70S ribosomes. In Dinoroseobacter shibae (strain DSM 16493 / NCIMB 14021 / DFL 12), this protein is Ribosome maturation factor RimM.